We begin with the raw amino-acid sequence, 462 residues long: Cytochrome c biogenesis protein CcsB (462 aa).

The next 3 membrane-spanning stretches (helical) occupy residues 30 to 50 (LRVA…GTVI), 89 to 109 (TWWY…CTFR), and 175 to 195 (IGPI…IWGA).

This sequence belongs to the Ccs1/CcsB family. May interact with CcsA.

It localises to the cellular thylakoid membrane. Required during biogenesis of c-type cytochromes (cytochrome c6 and cytochrome f) at the step of heme attachment. The protein is Cytochrome c biogenesis protein CcsB of Picosynechococcus sp. (strain ATCC 27264 / PCC 7002 / PR-6) (Agmenellum quadruplicatum).